Reading from the N-terminus, the 85-residue chain is Large ribosomal subunit protein bL27 (85 aa).

The interval 1–20 (MATKKAGGSTRNGRDSEAKR) is disordered.

The protein belongs to the bacterial ribosomal protein bL27 family.

In Pasteurella multocida (strain Pm70), this protein is Large ribosomal subunit protein bL27.